The chain runs to 179 residues: Alkyl hydroperoxide reductase AhpD (179 aa).

Residue cysteine 130 is the Proton donor of the active site. An intrachain disulfide couples cysteine 130 to cysteine 133. Cysteine 133 functions as the Cysteine sulfenic acid (-SOH) intermediate in the catalytic mechanism.

Belongs to the AhpD family. As to quaternary structure, homotrimer.

It carries out the reaction N(6)-[(R)-dihydrolipoyl]-L-lysyl-[lipoyl-carrier protein] + a hydroperoxide = N(6)-[(R)-lipoyl]-L-lysyl-[lipoyl-carrier protein] + an alcohol + H2O. Functionally, antioxidant protein with alkyl hydroperoxidase activity. Required for the reduction of the AhpC active site cysteine residues and for the regeneration of the AhpC enzyme activity. This chain is Alkyl hydroperoxide reductase AhpD, found in Nocardia farcinica (strain IFM 10152).